The chain runs to 429 residues: Probable alcohol acetyltransferase orf1 (429 aa).

The protein belongs to the alcohol acetyltransferase FCK4 family.

The protein operates within secondary metabolite biosynthesis. Its function is as follows. Probable alcohol acetyltransferase; part of the gene cluster that mediates the biosynthesis of the glycolipid biosurfactant ustilagic acid (UA). UA is a secreted cellobiose glycolipid that is toxic for many microorganisms and confers biocontrol activity to U.maydis. UA consists of 15,16-dihydroxypalmitic or 2,15,16-trihydroxypalmitic acid, which is O-glycosidically linked to cellobiose at its terminal hydroxyl group. In addition, the cellobiose moiety is acetylated and acylated with a short-chain hydroxy fatty acid. UA biosynthesis starts with omega-hydroxylation of palmitic acid catalyzed by the cytochrome P450 monooxygenase cyp1. Terminal hydroxylation of palmitic acid precedes subterminal hydroxylation catalyzed by the cytochrome P450 monooxygenase cyp2. Sequential glucosylation of the hydroxy fatty acid is probably catalyzed by the glycosyltransferase ugt1. The cellobiose lipid is further decorated by acetylation of the proximal glucose residue and by acylation with a short-chain beta-hydroxy fatty acid at the distal glucose residue. The acyltransferase uat1 may be a good candidate for catalyzing either acetylation or acylation of the cellobiose lipid. The fatty acid synthase fas2 may be involved in synthesis of the carbon backbone of the short-chain beta-hydroxy fatty acid esterified to the cellobiose disaccharide. The secreted UA consists of a mixture of both alpha-hydroxylated and non-hydroxylated glycolipids; therefore, alpha-hydroxylation of the long-chain fatty, catalyzed by the fatty acid hydroxylase ahd1, occurs late in UA biosynthesis and may be the last step before secretion. The polypeptide is Probable alcohol acetyltransferase orf1 (Mycosarcoma maydis (Corn smut fungus)).